The primary structure comprises 1436 residues: MTEQQKFKVLADQIKISNQLDAEILNSGELTRIDVSNKNRTWEFHITLPQFLAHEDYLLFINAIEQEFKDIANVTCRFTVTNGTNQDEHAIKYFGHCIDQTALSPKVKGQLKQKKLIMSGKVLKVMVSNDIERNHFDKACNGSLIKAFRNCGFDIDKIIFETNDNDQEQNLASLEAHIQEEDEQSARLATEKLEKMKAEKAKQQDNNESAVDKCQIGKPIQIENIKPIESIIEEEFKVAIEGVIFDINLKELKSGRHIVEIKVTDYTDSLVLKMFTRKNKDDLEHFKALSVGKWVRAQGRIEEDTFIRDLVMMMSDIEEIKKATKKDKAEEKRVEFHLHTAMSQMDGIPNIGAYVKQAADWGHPAIAVTDHNVVQAFPDAHAAAEKHGIKMIYGMEGMLVDDGVPIAYKPQDVVLKDATYVVFDVETTGLSNQYDKIIELAAVKVHNGEIIDKFERFSNPHERLSETIINLTHITDDMLVDAPEIEEVLTEFKEWVGDAIFVAHNASFDMGFIDTGYERLGFGPSTNGVIDTLELSRTINTEYGKHGLNFLAKKYGVELTQHHRAIYDTEATAYIFIKMVQQMKELGVLNHNEINKKLSNEDAYKRARPSHVTLIVQNQQGLKNLFKIVSASLVKYFYRTPRIPRSLLDEYREGLLVGTACDEGELFTAVMQKDQSQVEKIAKYYDFIEIQPPALYQDLIDRELIRDTETLHEIYQRLIHAGDTAGIPVIATGNAHYLFEHDGIARKILIASQPGNPLNRSTLPEAHFRTTDEMLNEFHFLGEEKAHEIVVKNTNELADRIERVVPIKDELYTPRMEGANEEIRELSYANARKLYGEDLPQIVIDRLEKELKSIIGNGFAVIYLISQRLVKKSLDDGYLVGSRGSVGSSFVATMTEITEVNPLPPHYICPNCKTSEFFNDGSVGSGFDLPDKTCETCGAPLIKEGQDIPFETFLGFKGDKVPDIDLNFSGEYQPNAHNYTKVLFGEDKVFRAGTIGTVAEKTAFGYVKGYLNDQGIHKRGAEIDRLVKGCTGVKRTTGQHPGGIIVVPDYMDIYDFTPIQYPADDQNSAWMTTHFDFHSIHDNVLKLDILGHDDPTMIRMLQDLSGIDPKTIPVDDKEVMQIFSTPESLGVTEDEILCKTGTFGVPEFGTGFVRQMLEDTKPTTFSELVQISGLSHGTDVWLGNAQELIKTGICDLSSVIGCRDDIMVYLMYAGLEPSMAFKIMESVRKGKGLTEEMIETMKENEVPDWYLDSCLKIKYMFPKAHAAAYVLMAVRIAYFKVHHPLYYYASYFTIRASDFDLITMIKDKTSIRNTVKDMYSRYMDLGKKEKDVLTVLEIMNEMAHRGYRMQPISLEKSQAFEFIIEGDTLIPPFISVPGLGENVAKRIVEARDDGPFLSKEDLNKKAGLSQKIIEYLDELGSLPNLPDKAQLSIFDM.

Residues 420-576 form the Exonuclease domain; the sequence is YVVFDVETTG…YDTEATAYIF (157 aa).

This sequence belongs to the DNA polymerase type-C family. PolC subfamily.

It localises to the cytoplasm. The catalysed reaction is DNA(n) + a 2'-deoxyribonucleoside 5'-triphosphate = DNA(n+1) + diphosphate. In terms of biological role, required for replicative DNA synthesis. This DNA polymerase also exhibits 3' to 5' exonuclease activity. The sequence is that of DNA polymerase III PolC-type from Staphylococcus aureus (strain MW2).